The following is a 1200-amino-acid chain: ATP-dependent helicase/deoxyribonuclease subunit B (1200 aa).

It belongs to the helicase family. AddB/RexB type 2 subfamily. As to quaternary structure, heterodimer of AddA and RexB. Mg(2+) serves as cofactor.

Functionally, the heterodimer acts as both an ATP-dependent DNA helicase and an ATP-dependent, dual-direction single-stranded exonuclease. Recognizes the chi site generating a DNA molecule suitable for the initiation of homologous recombination. This subunit has 5' -&gt; 3' nuclease activity but not helicase activity. The polypeptide is ATP-dependent helicase/deoxyribonuclease subunit B (Lactiplantibacillus plantarum (strain ATCC BAA-793 / NCIMB 8826 / WCFS1) (Lactobacillus plantarum)).